The primary structure comprises 374 residues: F-box/kelch-repeat protein At2g24250 (374 aa).

In terms of domain architecture, F-box spans 14–63 (PDWSQLPEELLHIISTHLEDHYFDAVHARSVCRSWRSTFPFPSSLLRQSY). 2 Kelch repeats span residues 100-150 (SEYF…PLGH) and 249-301 (NFLV…LGNF).

The chain is F-box/kelch-repeat protein At2g24250 from Arabidopsis thaliana (Mouse-ear cress).